Here is a 68-residue protein sequence, read N- to C-terminus: Small ribosomal subunit protein bS21 (68 aa).

This sequence belongs to the bacterial ribosomal protein bS21 family.

The chain is Small ribosomal subunit protein bS21 from Endomicrobium trichonymphae.